A 175-amino-acid polypeptide reads, in one-letter code: Sec-independent protein translocase protein TatB (175 aa).

A helical membrane pass occupies residues 1 to 21 (MLDLGLSKMALIGVVALVVLG). Residues 99–115 (GDPAAADASGGLGATSD) show a composition bias toward low complexity. The interval 99–118 (GDPAAADASGGLGATSDEPS) is disordered.

It belongs to the TatB family. As to quaternary structure, the Tat system comprises two distinct complexes: a TatABC complex, containing multiple copies of TatA, TatB and TatC subunits, and a separate TatA complex, containing only TatA subunits. Substrates initially bind to the TatABC complex, which probably triggers association of the separate TatA complex to form the active translocon.

It is found in the cell inner membrane. In terms of biological role, part of the twin-arginine translocation (Tat) system that transports large folded proteins containing a characteristic twin-arginine motif in their signal peptide across membranes. Together with TatC, TatB is part of a receptor directly interacting with Tat signal peptides. TatB may form an oligomeric binding site that transiently accommodates folded Tat precursor proteins before their translocation. The polypeptide is Sec-independent protein translocase protein TatB (Burkholderia thailandensis (strain ATCC 700388 / DSM 13276 / CCUG 48851 / CIP 106301 / E264)).